We begin with the raw amino-acid sequence, 188 residues long: Nicotinamide-nucleotide adenylyltransferase (188 aa).

It belongs to the archaeal NMN adenylyltransferase family.

Its subcellular location is the cytoplasm. It catalyses the reaction beta-nicotinamide D-ribonucleotide + ATP + H(+) = diphosphate + NAD(+). It participates in cofactor biosynthesis; NAD(+) biosynthesis; NAD(+) from nicotinamide D-ribonucleotide: step 1/1. This is Nicotinamide-nucleotide adenylyltransferase from Thermococcus kodakarensis (strain ATCC BAA-918 / JCM 12380 / KOD1) (Pyrococcus kodakaraensis (strain KOD1)).